A 215-amino-acid chain; its full sequence is Thiamine import ATP-binding protein ThiQ (215 aa).

In terms of domain architecture, ABC transporter spans 2-215; that stretch reads IYLNNVILND…GQISQLQKGV (214 aa). 32–39 contributes to the ATP binding site; the sequence is GESGAGKS.

It belongs to the ABC transporter superfamily. Thiamine importer (TC 3.A.1.19.1) family. In terms of assembly, the complex is composed of two ATP-binding proteins (ThiQ), two transmembrane proteins (ThiP) and a solute-binding protein (ThiB).

The protein resides in the cell inner membrane. The enzyme catalyses thiamine(out) + ATP + H2O = thiamine(in) + ADP + phosphate + H(+). In terms of biological role, part of the ABC transporter complex ThiBPQ involved in thiamine import. Responsible for energy coupling to the transport system. This chain is Thiamine import ATP-binding protein ThiQ, found in Haemophilus influenzae (strain ATCC 51907 / DSM 11121 / KW20 / Rd).